Consider the following 1041-residue polypeptide: FHIP family protein GF15501 (1041 aa).

Disordered stretches follow at residues 797-856 (RKGN…NKRR) and 907-987 (SNSS…SEPV). Ser803 carries the post-translational modification Phosphoserine. The span at 808-824 (NLQQQQALNPAQQQGQQ) shows a compositional bias: low complexity. Composition is skewed to polar residues over residues 825-843 (RSAY…TPTS) and 907-933 (SNSS…LSTQ). Positions 942–973 (SGSSSNSSMGGSSQTLSAHSNATTTHSSSTLH) are enriched in low complexity.

This sequence belongs to the FHIP family.

This is FHIP family protein GF15501 from Drosophila ananassae (Fruit fly).